The following is a 174-amino-acid chain: Ribosome maturation factor RimP (174 aa).

Belongs to the RimP family.

It localises to the cytoplasm. Its function is as follows. Required for maturation of 30S ribosomal subunits. The sequence is that of Ribosome maturation factor RimP from Acinetobacter baumannii (strain SDF).